Consider the following 281-residue polypeptide: Carbonic anhydrase (281 aa).

Residues C106, H161, and C164 each coordinate Zn(2+).

It belongs to the beta-class carbonic anhydrase family. It depends on Zn(2+) as a cofactor.

It localises to the cytoplasm. The protein resides in the nucleus. The protein localises to the mitochondrion intermembrane space. The enzyme catalyses hydrogencarbonate + H(+) = CO2 + H2O. Its activity is regulated as follows. Amines and amino acids act as activators of catalytic activity, whereas natural product-based phenols, dithiocarbamates, aliphatic and aromatic carboxylates, boronic acids, and sulfonamides act as inhibitors of enzymatic activity. Also inhibited by anions such as cyanide and carbonate, and to a lesser extent by sulfate, phenylboronic, and phenyl arsonic acid. Functionally, catalyzes the reversible hydration of CO(2) to H(2)CO(3). The main role may be to provide inorganic carbon for the bicarbonate-dependent carboxylation reactions catalyzed by pyruvate carboxylase, acetyl-CoA carboxylase and carbamoyl-phosphate synthetase. Involved in protection against oxidative damage. Acts as a CO(2) chemosensor and induces CO(2)-mediated filamentation. Essential for pathological growth in niches where sufficient CO(2) is not supplied by the host. Necessary for white-to-opaque switching at low CO(2) concentrations. The polypeptide is Carbonic anhydrase (NCE103) (Candida albicans (strain SC5314 / ATCC MYA-2876) (Yeast)).